The primary structure comprises 211 residues: Thiamine-phosphate synthase (211 aa).

4-amino-2-methyl-5-(diphosphooxymethyl)pyrimidine contacts are provided by residues 37 to 41 (QLRIK) and asparagine 69. The Mg(2+) site is built by aspartate 70 and aspartate 89. Serine 108 contacts 4-amino-2-methyl-5-(diphosphooxymethyl)pyrimidine. 2-[(2R,5Z)-2-carboxy-4-methylthiazol-5(2H)-ylidene]ethyl phosphate is bound at residue 134–136 (TQT). 4-amino-2-methyl-5-(diphosphooxymethyl)pyrimidine is bound at residue lysine 137. Residues glycine 166 and 186–187 (VS) contribute to the 2-[(2R,5Z)-2-carboxy-4-methylthiazol-5(2H)-ylidene]ethyl phosphate site.

It belongs to the thiamine-phosphate synthase family. Mg(2+) is required as a cofactor.

The enzyme catalyses 2-[(2R,5Z)-2-carboxy-4-methylthiazol-5(2H)-ylidene]ethyl phosphate + 4-amino-2-methyl-5-(diphosphooxymethyl)pyrimidine + 2 H(+) = thiamine phosphate + CO2 + diphosphate. The catalysed reaction is 2-(2-carboxy-4-methylthiazol-5-yl)ethyl phosphate + 4-amino-2-methyl-5-(diphosphooxymethyl)pyrimidine + 2 H(+) = thiamine phosphate + CO2 + diphosphate. It catalyses the reaction 4-methyl-5-(2-phosphooxyethyl)-thiazole + 4-amino-2-methyl-5-(diphosphooxymethyl)pyrimidine + H(+) = thiamine phosphate + diphosphate. It functions in the pathway cofactor biosynthesis; thiamine diphosphate biosynthesis; thiamine phosphate from 4-amino-2-methyl-5-diphosphomethylpyrimidine and 4-methyl-5-(2-phosphoethyl)-thiazole: step 1/1. Condenses 4-methyl-5-(beta-hydroxyethyl)thiazole monophosphate (THZ-P) and 2-methyl-4-amino-5-hydroxymethyl pyrimidine pyrophosphate (HMP-PP) to form thiamine monophosphate (TMP). This is Thiamine-phosphate synthase from Salmonella schwarzengrund (strain CVM19633).